The chain runs to 417 residues: Serine hydroxymethyltransferase (417 aa).

Residues Leu121 and 125–127 each bind (6S)-5,6,7,8-tetrahydrofolate; that span reads GHL. Lys230 carries the N6-(pyridoxal phosphate)lysine modification. Glu245 lines the (6S)-5,6,7,8-tetrahydrofolate pocket.

It belongs to the SHMT family. In terms of assembly, homodimer. Pyridoxal 5'-phosphate serves as cofactor.

Its subcellular location is the cytoplasm. It carries out the reaction (6R)-5,10-methylene-5,6,7,8-tetrahydrofolate + glycine + H2O = (6S)-5,6,7,8-tetrahydrofolate + L-serine. It functions in the pathway one-carbon metabolism; tetrahydrofolate interconversion. Its pathway is amino-acid biosynthesis; glycine biosynthesis; glycine from L-serine: step 1/1. In terms of biological role, catalyzes the reversible interconversion of serine and glycine with tetrahydrofolate (THF) serving as the one-carbon carrier. This reaction serves as the major source of one-carbon groups required for the biosynthesis of purines, thymidylate, methionine, and other important biomolecules. Also exhibits THF-independent aldolase activity toward beta-hydroxyamino acids, producing glycine and aldehydes, via a retro-aldol mechanism. The chain is Serine hydroxymethyltransferase from Desulfitobacterium hafniense (strain DSM 10664 / DCB-2).